Here is a 97-residue protein sequence, read N- to C-terminus: Large ribosomal subunit protein uL23 (97 aa).

This sequence belongs to the universal ribosomal protein uL23 family. As to quaternary structure, part of the 50S ribosomal subunit. Contacts protein L29, and trigger factor when it is bound to the ribosome.

Functionally, one of the early assembly proteins it binds 23S rRNA. One of the proteins that surrounds the polypeptide exit tunnel on the outside of the ribosome. Forms the main docking site for trigger factor binding to the ribosome. The polypeptide is Large ribosomal subunit protein uL23 (Rhizobium rhizogenes (strain K84 / ATCC BAA-868) (Agrobacterium radiobacter)).